Consider the following 420-residue polypeptide: Type II methyltransferase M.NmeDI (420 aa).

Positions 1-23 (MMSLKIQPAVPKKSDKPSATNRD) are disordered. Residues 56-411 (TLIFSFFSGA…MTLKSYLENH (356 aa)) enclose the SAM-dependent MTase C5-type domain. Cys148 is a catalytic residue.

The protein belongs to the class I-like SAM-binding methyltransferase superfamily. C5-methyltransferase family.

It carries out the reaction a 2'-deoxycytidine in DNA + S-adenosyl-L-methionine = a 5-methyl-2'-deoxycytidine in DNA + S-adenosyl-L-homocysteine + H(+). Functionally, a methylase that recognizes the double-stranded sequence 5'-RCCGGB-3', methylates C-2 on both strands, and protects the DNA from cleavage by the NmeDI endonuclease. The protein is Type II methyltransferase M.NmeDI (nmeDIMP) of Neisseria meningitidis serogroup C.